The sequence spans 149 residues: Transcriptional repressor NrdR (149 aa).

Residues 3-34 fold into a zinc finger; sequence CPFCGHAATQVIDTRMSEEGDTVRRRRRCESC. The ATP-cone domain maps to 49 to 139; it reads PAVVKKNGSR…VYRSFEDVSE (91 aa).

This sequence belongs to the NrdR family. Requires Zn(2+) as cofactor.

Its function is as follows. Negatively regulates transcription of bacterial ribonucleotide reductase nrd genes and operons by binding to NrdR-boxes. This chain is Transcriptional repressor NrdR, found in Ralstonia nicotianae (strain ATCC BAA-1114 / GMI1000) (Ralstonia solanacearum).